We begin with the raw amino-acid sequence, 353 residues long: MSHILDKIDTVYPFPPKPIPLTQDEKAAYIASIKQLLNEKDAVLIAHYYTDPEIQALAEETGGFVGDSLEMAKFGNRHPAGTLIIAGVRFMGESAKILTPEKRILMPTLEAECSLDLGCPADKFTEFCDAHPDHTVVVYANTSAAVKARADWVVTSSIALEIVEHLDAEDKPIIWGPDRHLGSYIANKTGADMLLWQGECVVHDEFSADALRKMKAVYPDAAILVHPESPASVVELADAVGSTSQLIKAAKELPQQKMIVATDKGIFFKMQQLVPEKELIEAPTAGAGATCRSCAHCPWMAMNGLKAIETALREGGEQHEIFVDEALRVKSLIPLNRMLDFAEKLNMQVKGNA.

Iminosuccinate contacts are provided by histidine 47 and serine 68. Cysteine 113 contacts [4Fe-4S] cluster. Iminosuccinate-binding positions include 139 to 141 (YAN) and serine 156. Cysteine 200 is a [4Fe-4S] cluster binding site. Residues 226-228 (HPE) and threonine 243 contribute to the iminosuccinate site. Residue cysteine 297 participates in [4Fe-4S] cluster binding.

This sequence belongs to the quinolinate synthase family. Type 1 subfamily. Requires [4Fe-4S] cluster as cofactor.

It is found in the cytoplasm. The catalysed reaction is iminosuccinate + dihydroxyacetone phosphate = quinolinate + phosphate + 2 H2O + H(+). The protein operates within cofactor biosynthesis; NAD(+) biosynthesis; quinolinate from iminoaspartate: step 1/1. In terms of biological role, catalyzes the condensation of iminoaspartate with dihydroxyacetone phosphate to form quinolinate. This Vibrio vulnificus (strain CMCP6) protein is Quinolinate synthase.